Reading from the N-terminus, the 222-residue chain is Uridine diphosphate glucose pyrophosphatase NUDT14 (222 aa).

Residues 38–206 (KTHDSVTILM…DVPKTLGVIF (169 aa)) form the Nudix hydrolase domain. A Nudix box motif is present at residues 111–129 (PGLSLEEVACKEAWEECGY).

The protein belongs to the Nudix hydrolase family. Homodimer. It depends on Mg(2+) as a cofactor.

Its subcellular location is the cytoplasm. It catalyses the reaction UDP-sugar + H2O = UMP + alpha-D-aldose 1-phosphate.. Its function is as follows. Hydrolyzes UDP-glucose to glucose 1-phosphate and UMP and ADP-ribose to ribose 5-phosphate and AMP. The physiological substrate is probably UDP-glucose. Poor activity on other substrates such as ADP-glucose, CDP-glucose, GDP-glucose and GDP-mannose. The protein is Uridine diphosphate glucose pyrophosphatase NUDT14 (NUDT14) of Bos taurus (Bovine).